We begin with the raw amino-acid sequence, 377 residues long: Anhydro-N-acetylmuramic acid kinase (377 aa).

ATP is bound at residue 12 to 19; sequence GTSLDGID.

Belongs to the anhydro-N-acetylmuramic acid kinase family.

The catalysed reaction is 1,6-anhydro-N-acetyl-beta-muramate + ATP + H2O = N-acetyl-D-muramate 6-phosphate + ADP + H(+). Its pathway is amino-sugar metabolism; 1,6-anhydro-N-acetylmuramate degradation. It functions in the pathway cell wall biogenesis; peptidoglycan recycling. Catalyzes the specific phosphorylation of 1,6-anhydro-N-acetylmuramic acid (anhMurNAc) with the simultaneous cleavage of the 1,6-anhydro ring, generating MurNAc-6-P. Is required for the utilization of anhMurNAc either imported from the medium or derived from its own cell wall murein, and thus plays a role in cell wall recycling. The protein is Anhydro-N-acetylmuramic acid kinase of Methylorubrum extorquens (strain CM4 / NCIMB 13688) (Methylobacterium extorquens).